A 694-amino-acid polypeptide reads, in one-letter code: Voltage-gated chloride channel TMC4 (694 aa).

Residues 1–21 are disordered; the sequence is MEAWGQSPACSSSRKARTGPS. Residues 1–150 are Extracellular-facing; the sequence is MEAWGQSPAC…GTESYFSLLR (150 aa). Residues 151–171 form a helical membrane-spanning segment; sequence FLLFLNLVASVIEICMKLIPT. The Cytoplasmic portion of the chain corresponds to 172-231; it reads WLEGAPPGPPGPNISSPCGSYIPHTHGLVAFPTQLFNLLSGEGYLEWSPLFYGFYPPRSN. The chain crosses the membrane as a helical span at residues 232 to 252; the sequence is LAITYLCSVFAISVIYLLCIL. Residues 253 to 330 lie on the Extracellular side of the membrane; that stretch reads RRSVSGLKET…SQRAKVWSMR (78 aa). A helical membrane pass occupies residues 331–351; that stretch reads ALLNVLVLALLGAAFYGIYWA. The Cytoplasmic portion of the chain corresponds to 352–376; it reads TEYTLTLQETPLVRQTPLFKLLVDY. The chain crosses the membrane as a helical span at residues 377 to 397; sequence LPSIFISLFNFVLPPVFKFIA. Over 398 to 407 the chain is Extracellular; the sequence is SLEGYTQSRQ. The chain crosses the membrane as a helical span at residues 408-428; the sequence is IVLILLRTVFLRLASLVFLLV. Over 429–465 the chain is Cytoplasmic; it reads SLWSQITCGGNMEAEGCKACGYNYKEIPCWETRLGQE. The helical transmembrane segment at 466–486 threads the bilayer; sequence MYKLVLFDLLMGLLVTLLVQF. Residues 487–513 lie on the Extracellular side of the membrane; sequence PRKILCGLCPGALGRLSGTLEFQVPDE. A helical transmembrane segment spans residues 514-534; the sequence is VLGLIYAQTVVWVGSFFCPLL. A topological domain (cytoplasmic) is located at residue Pro535. A helical transmembrane segment spans residues 536-556; that stretch reads LINTAKFLILFCLKKITLFSI. Over 557–574 the chain is Extracellular; the sequence is YSPASRTFRASTANFFFP. Residues 575-595 traverse the membrane as a helical segment; sequence LVLLVGLAISAVPVLYSIFLI. Residues 596–635 are Cytoplasmic-facing; it reads PPSKLCGPFRGKLSIWAQIPEAIESLPQTAQNFLYFLGTQ. The chain crosses the membrane as a helical span at residues 636-656; it reads AFTVPLLILSSILMMYTVALA. Topologically, residues 657–694 are extracellular; it reads NCYGRLISELKRQIETEVQNKVFLAQRAVALSSRNGTS. Asn691 carries N-linked (GlcNAc...) asparagine glycosylation.

Belongs to the TMC family. As to expression, expressed in taste bud cells of the posterior tongue. Ubiquitously expressed.

It localises to the membrane. It catalyses the reaction chloride(in) = chloride(out). In terms of biological role, voltage-gated chloride channel involved in high-concentration salt taste sensation. Depolarization induced by high NaCl concentration may trigger the activation of TMC4-mediated chloride influx into taste bud cells, helping the return to resting potential. Also allows permeation of organic anions including gluconate, but their current amplitudes at positive potentials are less than that of chloride. Involved in pH and temperature-dependent modulation of salty taste. In Mus musculus (Mouse), this protein is Voltage-gated chloride channel TMC4.